A 351-amino-acid chain; its full sequence is ATP-dependent protease ATP-binding subunit-like protein (351 aa).

The disordered stretch occupies residues Met1–Val26. Gly79–Thr86 lines the ATP pocket.

This sequence belongs to the ClpA/ClpB family.

This chain is ATP-dependent protease ATP-binding subunit-like protein, found in Rhodococcus erythropolis (Arthrobacter picolinophilus).